A 477-amino-acid polypeptide reads, in one-letter code: ATP-dependent rRNA helicase RRP3 (477 aa).

Positions 1–22 (MSVKVDGMINKKSKTHSKKLDA) are disordered. The short motif at 65-93 (KSFNELKLIPELLEAIQQMKFTKPTPIQS) is the Q motif element. A Helicase ATP-binding domain is found at 96–267 (IPHALEGKDI…RASLHNPVRV (172 aa)). 109 to 116 (AQTGSGKT) is a binding site for ATP. A DEAD box motif is present at residues 215–218 (DEAD). The Helicase C-terminal domain occupies 294-438 (YLIHLLNEFL…KDPSPSKAVL (145 aa)). A disordered region spans residues 452 to 477 (AIRQTKDFHEKRNPKKNRDDRDREER).

Belongs to the DEAD box helicase family. DDX47/RRP3 subfamily. In terms of assembly, interacts with the SSU processome.

Its subcellular location is the nucleus. The enzyme catalyses ATP + H2O = ADP + phosphate + H(+). In terms of biological role, ATP-dependent rRNA helicase required for pre-ribosomal RNA processing. Involved in the maturation of the 35S-pre-rRNA and to its cleavage to mature 18S rRNA. This is ATP-dependent rRNA helicase RRP3 from Debaryomyces hansenii (strain ATCC 36239 / CBS 767 / BCRC 21394 / JCM 1990 / NBRC 0083 / IGC 2968) (Yeast).